Here is a 248-residue protein sequence, read N- to C-terminus: Probable transcriptional regulatory protein PLES_43501 (248 aa).

This sequence belongs to the TACO1 family.

It is found in the cytoplasm. The polypeptide is Probable transcriptional regulatory protein PLES_43501 (Pseudomonas aeruginosa (strain LESB58)).